The sequence spans 197 residues: MGDQRGTRVYVGNLTDKVKKDDLEGEFTKYGKLNSVWIAFNPPGFAFVEFEHRDDAEKACDILNGSELLGSQLRVEISKGRPRQGRRGGPMDRGGRRGDFGRHSITSGGSGGGGFRQRGSSGSSSRHTERGYSSGRSGASSYNGREGGGSGFNRREVYGGGRDSSRYSSGSSASYGRTGGQSAGRFRSRSPVGNHRF.

Residues 7-80 enclose the RRM domain; that stretch reads TRVYVGNLTD…SQLRVEISKG (74 aa). The segment at 74–197 is disordered; it reads RVEISKGRPR…SRSPVGNHRF (124 aa). A compositionally biased stretch (basic and acidic residues) spans 89-102; sequence GPMDRGGRRGDFGR. T106 carries the phosphothreonine modification. Composition is skewed to low complexity over residues 117–144 and 166–176; these read QRGS…SYNG and RYSSGSSASYG. Phosphoserine is present on residues S168, S171, S174, S188, and S190.

Belongs to the splicing factor SR family. In terms of processing, extensively phosphorylated on serine residues in the RS domain.

It localises to the nucleus. In terms of biological role, may control important aspects of development. This Drosophila melanogaster (Fruit fly) protein is RNA-binding protein Rsf1 (Rsf1).